Reading from the N-terminus, the 1381-residue chain is EH domain-containing and endocytosis protein 1 (1381 aa).

EH domains follow at residues 14–113 (EQAF…NPAP) and 135–227 (DIAK…IRLE). EF-hand domains follow at residues 47–82 (LPGQLLSQVWATVDIDNKGFLNLNEFSAALRMIAQL) and 167–202 (LPNQTLGEIWALCDRDASGVLDKSEFIMAMYLIQLC). Residues D180, D182, S184, and E191 each coordinate Ca(2+). T238 carries the post-translational modification Phosphothreonine. 2 positions are modified to phosphoserine: S241 and S244. A Phosphothreonine modification is found at T245. 2 positions are modified to phosphoserine: S248 and S249. T251 carries the phosphothreonine modification. S265 carries the post-translational modification Phosphoserine. Residues 276–311 (EKKQQFDAIFDSLDKQHAGSLSSAVLVPFFLSSRLN) enclose the EF-hand 3 domain. The region spanning 277 to 366 (KKQQFDAIFD…NELLQSPALG (90 aa)) is the EH 3 domain. The segment at 389–535 (SKPSLQDMPH…SSPVKRTAST (147 aa)) is disordered. Composition is skewed to polar residues over residues 404–424 (AVNTQPTVPQVLPQNSNNGSL) and 432–447 (PSFSSPSPTKAQTVVQ). S419 carries the post-translational modification Phosphoserine. A compositionally biased stretch (low complexity) spans 448–470 (NNTNNSFSYDNNNGQATLQQQQP). Phosphothreonine occurs at positions 450, 477, and 487. Residues 477–494 (THSSSGLKKFTPTSNFGQ) are compositionally biased toward polar residues. S495 is subject to Phosphoserine. Positions 593 to 882 (GEASAQLSNA…RELSERQMNL (290 aa)) form a coiled coil. K674 participates in a covalent cross-link: Glycyl lysine isopeptide (Lys-Gly) (interchain with G-Cter in ubiquitin). S848 is subject to Phosphoserine. The interval 898–919 (SASNTDTTTKEATSRGNVHEDT) is disordered. The span at 905-919 (TTKEATSRGNVHEDT) shows a compositional bias: basic and acidic residues. Phosphoserine is present on residues S931, S950, S964, S1008, S1012, and S1020. Disordered stretches follow at residues 933 to 1202 (LNVN…KDEF), 1214 to 1285 (VEED…QVSN), and 1298 to 1322 (SKAEPTKVATPSIPQQPIPLKNDPI). The segment covering 937 to 957 (RVKDDEEKTERTESDVFDRDV) has biased composition (basic and acidic residues). Composition is skewed to polar residues over residues 960–989 (LGSQSDSENANTNNGTQSGNETANPNLTET) and 1005–1019 (RSQSLTSSVANNAPQ). The segment covering 1021–1036 (VRDDVELPETLEERDT) has biased composition (basic and acidic residues). 2 stretches are compositionally biased toward polar residues: residues 1037-1049 (INNTANRDNTGNL) and 1061-1073 (ATASTDVLSNETT). A Phosphothreonine modification is found at T1046. Phosphoserine is present on residues S1069, S1087, S1093, S1095, S1096, and S1100. Over residues 1093 to 1103 (SVSSIQESPKI) the composition is skewed to polar residues. T1111 carries the post-translational modification Phosphothreonine. The span at 1127 to 1139 (SDSSSSDDDEFED) shows a compositional bias: acidic residues. 2 stretches are compositionally biased toward polar residues: residues 1147–1164 (TVKTLQTPYNAQPTSSLE) and 1178–1195 (TSPSHNEGNSKKASTNSI). A phosphoserine mark is found at S1181 and S1187. Positions 1214 to 1226 (VEEDNGADSESEF) are enriched in acidic residues. Residues 1217-1381 (DNGADSESEF…AATNFLLDSA (165 aa)) form an able to bind biological membranes region. Polar residues predominate over residues 1253–1285 (NAFTGTLTSSSNPTIPKPQVQQQSTSDPAQVSN). Position 1307 is a phosphothreonine (T1307). K1329 participates in a covalent cross-link: Glycyl lysine isopeptide (Lys-Gly) (interchain with G-Cter in ubiquitin). The UBA domain occupies 1338–1380 (ATTPKSLAVEELSGMGFTEEEAHNALEKCNWDLEAATNFLLDS). S1343 bears the Phosphoserine mark.

This sequence belongs to the VDP/USO1/EDE1 family. As to quaternary structure, interacts (via UBA domain) with monoubiquitin and ENT1 (via asparagine-proline-phenylalanine tripeptide motif called NPF). Interacts with PAL1 and SYP1.

It localises to the cytoplasm. Functions at the internalization step of the clathrin-mediated endocytosis (CME) as an early-acting scaffold protein. Requires clathrin adapter proteins, ENT1/2 and YAP1801/2, for normal spatiotemporal dynamics and viability. Binds to biological membranes in a ubiquitin-dependent manner. The protein is EH domain-containing and endocytosis protein 1 (EDE1) of Saccharomyces cerevisiae (strain ATCC 204508 / S288c) (Baker's yeast).